We begin with the raw amino-acid sequence, 82 residues long: Acyl carrier protein (82 aa).

The Carrier domain maps to 4–79; the sequence is PEMEARLKQI…DALNYIEQKL (76 aa). Ser-39 carries the post-translational modification O-(pantetheine 4'-phosphoryl)serine.

It belongs to the acyl carrier protein (ACP) family. 4'-phosphopantetheine is transferred from CoA to a specific serine of apo-ACP by AcpS. This modification is essential for activity because fatty acids are bound in thioester linkage to the sulfhydryl of the prosthetic group.

The protein localises to the cytoplasm. The protein operates within lipid metabolism; fatty acid biosynthesis. Its function is as follows. Carrier of the growing fatty acid chain in fatty acid biosynthesis. The protein is Acyl carrier protein of Roseiflexus castenholzii (strain DSM 13941 / HLO8).